A 612-amino-acid polypeptide reads, in one-letter code: Calcium-dependent protein kinase 27 (612 aa).

Gly-2 carries the N-myristoyl glycine lipid modification. The segment at Pro-23–Gly-132 is disordered. Residues Pro-28 to Ser-50 are compositionally biased toward low complexity. Residues Ser-51–Ala-100 are compositionally biased toward pro residues. Residues Ser-117 to Arg-127 show a composition bias toward basic residues. Residues Tyr-150–Leu-408 form the Protein kinase domain. ATP contacts are provided by residues Leu-156 to Thr-164 and Lys-179. The Proton acceptor role is filled by Asp-274. The tract at residues Ala-414 to Ile-444 is autoinhibitory domain. EF-hand domains lie at Glu-451–Asn-486, Met-487–Val-522, Glu-523–Glu-558, and Arg-561–Gly-592. Residues Asp-464, Asp-466, Ser-468, Gln-470, Glu-475, Asp-500, Asp-502, Ser-504, Thr-506, Glu-511, Asp-536, Asp-538, Ser-540, Tyr-542, Glu-547, Asp-570, Asp-572, Asp-574, Arg-576, and Glu-581 each contribute to the Ca(2+) site.

It belongs to the protein kinase superfamily. Ser/Thr protein kinase family. CDPK subfamily.

The protein resides in the membrane. It catalyses the reaction L-seryl-[protein] + ATP = O-phospho-L-seryl-[protein] + ADP + H(+). The enzyme catalyses L-threonyl-[protein] + ATP = O-phospho-L-threonyl-[protein] + ADP + H(+). With respect to regulation, activated by calcium. Autophosphorylation may play an important role in the regulation of the kinase activity. Its function is as follows. May play a role in signal transduction pathways that involve calcium as a second messenger. This is Calcium-dependent protein kinase 27 from Oryza sativa subsp. japonica (Rice).